Consider the following 169-residue polypeptide: Thiol peroxidase (169 aa).

Positions 19-167 (LKVGDRAPEA…YDEVVNKVKE (149 aa)) constitute a Thioredoxin domain. Cys-61 functions as the Cysteine sulfenic acid (-SOH) intermediate in the catalytic mechanism. An intrachain disulfide couples Cys-61 to Cys-95.

The protein belongs to the peroxiredoxin family. Tpx subfamily. In terms of assembly, homodimer.

The enzyme catalyses a hydroperoxide + [thioredoxin]-dithiol = an alcohol + [thioredoxin]-disulfide + H2O. Thiol-specific peroxidase that catalyzes the reduction of hydrogen peroxide and organic hydroperoxides to water and alcohols, respectively. Plays a role in cell protection against oxidative stress by detoxifying peroxides. The polypeptide is Thiol peroxidase (Aquifex aeolicus (strain VF5)).